The sequence spans 67 residues: Large ribosomal subunit protein uL29 (67 aa).

Belongs to the universal ribosomal protein uL29 family.

This chain is Large ribosomal subunit protein uL29, found in Heliobacterium modesticaldum (strain ATCC 51547 / Ice1).